A 78-amino-acid polypeptide reads, in one-letter code: Acyl carrier protein (78 aa).

Residues 2-77 (SDIAERVKKI…DAIKYIGENM (76 aa)) form the Carrier domain. Residue serine 37 is modified to O-(pantetheine 4'-phosphoryl)serine.

This sequence belongs to the acyl carrier protein (ACP) family. Post-translationally, 4'-phosphopantetheine is transferred from CoA to a specific serine of apo-ACP by AcpS. This modification is essential for activity because fatty acids are bound in thioester linkage to the sulfhydryl of the prosthetic group.

It localises to the cytoplasm. It participates in lipid metabolism; fatty acid biosynthesis. In terms of biological role, carrier of the growing fatty acid chain in fatty acid biosynthesis. This Magnetococcus marinus (strain ATCC BAA-1437 / JCM 17883 / MC-1) protein is Acyl carrier protein.